A 507-amino-acid chain; its full sequence is MDVHIDNQVLSGLGTPLLVHLFVPDTVMAELCPNRVPNCEGAWCQTLFSDRTGLTRVCRVFAARGMLPGRPSHRGTFTSVPVYCDEGLPELYNPFHVAALRFYDEGGLVGELQIYYLSLFEGAKRALTDGHLIREASGVQESAAAMQPIPIDPGPPGGAGIEHMPVAAAQVEHPKTYDLKQILLEITQEENRGEQRLGHAGSPALCLGLRLRAGAETKAAAETSVSKHHPALENPSNIRGSAGGEGGGGRAGTGGTVGVGSGALSRVPVSFSKTRRAIRESRALVRGIAHIFSPHALYVVTYPELSAQGRLHRMTAVTHASPATDLAEVSILGAPEREFRFLISVALRISASFREKLAMQAWTAQQEIPVVIPTSYSRIYKNSDLIREAFFTVQTRVSWESCWVKATISNAPKTPDACLWIDSHPLYEEGASAWGKVIDSRPPGGLVGAASQLVALGTDGHCVHLATTSDGQAFLVLPGGFVIKGQLALTPEERGYILARHGIRREQ.

Positions 219–257 are disordered; sequence AAAETSVSKHHPALENPSNIRGSAGGEGGGGRAGTGGTV. Residues 241 to 257 show a composition bias toward gly residues; that stretch reads SAGGEGGGGRAGTGGTV.

The protein belongs to the herpesviridae CVC1 protein family. As to quaternary structure, interacts (via C-terminus) with capsid vertex component 2/CVC2.

It localises to the virion. The protein resides in the host nucleus. In terms of biological role, capsid vertex-specific component that plays a role during viral DNA encapsidation, assuring correct genome cleavage and presumably stabilizing capsids that contain full-length viral genomes. The polypeptide is Capsid vertex component 1 (Epstein-Barr virus (strain B95-8) (HHV-4)).